Here is a 124-residue protein sequence, read N- to C-terminus: Ribonuclease pancreatic (124 aa).

The span at lysine 1–methionine 13 shows a compositional bias: basic and acidic residues. The segment at lysine 1–asparagine 24 is disordered. Residues lysine 7 and arginine 10 each coordinate substrate. The active-site Proton acceptor is the histidine 12. Intrachain disulfides connect cysteine 26–cysteine 84, cysteine 40–cysteine 95, cysteine 58–cysteine 110, and cysteine 65–cysteine 72. An N-linked (GlcNAc...) asparagine; partial glycan is attached at asparagine 34. Substrate contacts are provided by residues lysine 41–threonine 45, lysine 66, and arginine 85. Histidine 119 serves as the catalytic Proton donor.

The protein belongs to the pancreatic ribonuclease family. Monomer. Interacts with and forms tight 1:1 complexes with RNH1. Dimerization of two such complexes may occur. Interaction with RNH1 inhibits this protein. In terms of tissue distribution, pancreas.

The protein localises to the secreted. The catalysed reaction is an [RNA] containing cytidine + H2O = an [RNA]-3'-cytidine-3'-phosphate + a 5'-hydroxy-ribonucleotide-3'-[RNA].. It catalyses the reaction an [RNA] containing uridine + H2O = an [RNA]-3'-uridine-3'-phosphate + a 5'-hydroxy-ribonucleotide-3'-[RNA].. Endonuclease that catalyzes the cleavage of RNA on the 3' side of pyrimidine nucleotides. Acts on single-stranded and double-stranded RNA. The sequence is that of Ribonuclease pancreatic (RNASE1) from Ovis aries (Sheep).